A 197-amino-acid chain; its full sequence is uncharacterized protein (197 aa).

Basic and acidic residues predominate over residues 168 to 185 (QRDDFSEDSHANDPKLVG). Residues 168-197 (QRDDFSEDSHANDPKLVGDDYVPQAPEQIN) form a disordered region.

This is an uncharacterized protein from Escherichia coli (strain K12).